An 89-amino-acid polypeptide reads, in one-letter code: Large ribosomal subunit protein L37-2 (89 aa).

Cys19, Cys22, Cys34, and Cys37 together coordinate Zn(2+). Residues 19 to 37 form a C4-type zinc finger; that stretch reads CRRCGNSSYHLQKSKCSQC.

Belongs to the eukaryotic ribosomal protein eL37 family. Zn(2+) is required as a cofactor.

Functionally, binds to the 23S rRNA. This is Large ribosomal subunit protein L37-2 from Drosophila melanogaster (Fruit fly).